The following is a 226-amino-acid chain: MPRPRKRQAGAAGPDKKQLSGKRTKTENSESASVKLENSSLEKTTTFKTCGKNLSNYWLMKSEPESRLEKGIDMKFSIEDLQAQPKQTTCWDGVRNYQAWNFLRAMKLEDEAFFYHSNCKQPGIVGLMKIVKEAYPDHTQFEKNDPHYDPSSKEDNPKWSMVDVQFVRMMKRFISLDELKTYHQAHKATGGPLKSMTLFTRQRLSVQPLTQEEFDFILSLEEAEPS.

The disordered stretch occupies residues 1–38; it reads MPRPRKRQAGAAGPDKKQLSGKRTKTENSESASVKLEN. The Nuclear localization signal motif lies at 5 to 10; sequence RKRQAG. Residues 14–28 are compositionally biased toward basic and acidic residues; that stretch reads PDKKQLSGKRTKTEN. Over residues 29–38 the composition is skewed to polar residues; sequence SESASVKLEN.

Phosphorylated.

It is found in the nucleus. Specifically binds 5-hydroxymethylcytosine (5hmC), suggesting that it acts as a specific reader of 5hmC. This Rattus norvegicus (Rat) protein is Thymocyte nuclear protein 1 (Thyn1).